A 286-amino-acid chain; its full sequence is CBY1-interacting BAR domain-containing protein 1 (286 aa).

The transit peptide at 1–47 (MLRRNLDERDAQTKQLQDAVTNVEKHFGELCQIFAAYVRKTARLRDK) directs the protein to the mitochondrion. The tract at residues 10 to 220 (DAQTKQLQDA…NIDEDEDLEV (211 aa)) is BAR-like. Positions 107–178 (KMKRDDLKAT…IDNFEKQKIK (72 aa)) form a coiled coil. Positions 258-286 (GQISTCRTRKDQQVEDEDDEELDVTEDEN) are disordered. Residues 271 to 286 (VEDEDDEELDVTEDEN) are compositionally biased toward acidic residues.

This sequence belongs to the CIBAR family. In terms of assembly, homodimer (via BAR-like domain). Heterodimer with FAM92B (via BAR-like domains). Interacts (via BAR-like domain) with CBY1; this interaction is required for targeting FAM92A to centriole and cilium basal body. Interacts (via BAR-like domain) with CBY3; both proteins form a ninefold symmetric structure at the flagellar base; are recruited to the annulus in a mutually dependent manner and regulate annulus positionning. As to expression, expressed in the heart, liver, spleen, lung, kidney, brain and muscle (at protein level). Strongly expressed throughout the developing limb bud, including the progress zone and the apical ectodermal ridge.

It localises to the cytoplasm. It is found in the cytoskeleton. The protein resides in the microtubule organizing center. The protein localises to the centrosome. Its subcellular location is the centriole. It localises to the cilium basal body. It is found in the cell projection. The protein resides in the cilium. The protein localises to the nucleus. Its subcellular location is the mitochondrion inner membrane. It localises to the flagellum. Functionally, plays a critical role in regulating mitochondrial ultrastructure and function by maintaining the integrity of mitochondrial morphology, particularly the organization of cristae. Preferentially binds to negatively charged phospholipids like cardiolipin and phosphatidylinositol 4,5-bisphosphate enhancing its interaction with mitochondrial membranes. Induces membrane curvature and tubulation, which are critical for maintaining mitochondrial ultrastructure and the organization of cristae. Plays a crucial role in ciliogenesis. May play a role in limb development through its role in ciliogenesis. Plays a key role in the correct positioning of the annulus, a septin-based ring structure in the sperm flagellum, serving both as a physical barrier and a membrane diffusion barrier that separates the midpiece (MP) from the principal piece (PP). This positioning is essential for proper sperm motility and function. Interacts with CBY3 to form a complex which localizes to the curved membrane region of the flagellar pocket. By doing so, may provide stability and rigidity to the periannular membrane to prevent membrane deformation. This function is crucial for halting annulus migration at the proximal end of the fibrous sheath-containing PP. This chain is CBY1-interacting BAR domain-containing protein 1, found in Mus musculus (Mouse).